Reading from the N-terminus, the 309-residue chain is Zinc transporter ZIP2 (309 aa).

Over 1 to 8 (MEQLLGIK) the chain is Extracellular. A helical membrane pass occupies residues 9-29 (LGCLFALLALTLGCGLTPICF). At 30–46 (KWFQIDAARGHHRLVLR) the chain is on the cytoplasmic side. The helical transmembrane segment at 47–67 (LLGCISAGVFLGAGFMHMTAE) threads the bilayer. Residues 68 to 103 (ALEEIESQIQKFMVQNRSASERNSSGDADSAHMEYP) lie on the Extracellular side of the membrane. The helical transmembrane segment at 104-124 (YGELIISLGFFFVFFLESLAL) threads the bilayer. Topologically, residues 125–164 (QCCPGAAGGSTVQDEEWGGAHIFELHSHGHLPSPSKGPLR) are cytoplasmic. The chain crosses the membrane as a helical span at residues 165 to 185 (ALVLLLSLSFHSVFEGLAVGL). Positions 175 and 179 each coordinate Zn(2+). Topologically, residues 186–189 (QPTV) are extracellular. A helical membrane pass occupies residues 190 to 210 (AATVQLCLAVLAHKGLVVFGV). Histidine 202 is a binding site for Zn(2+). Topologically, residues 211–224 (GMRLVHLGTSSRWA) are cytoplasmic. The helical transmembrane segment at 225–245 (VFSILLLALMSPLGLAVGLAV) threads the bilayer. At 246–258 (TGGDSEGGRGLAQ) the chain is on the extracellular side. Residues 259–279 (AVLEGVAAGTFLYVTFLEILP) form a helical membrane-spanning segment. Zn(2+) is bound at residue glutamate 276. Residues 280 to 288 (RELASPEAP) are Cytoplasmic-facing. The helical transmembrane segment at 289–309 (LAKWSCVAAGFAFMAFIALWA) threads the bilayer.

Belongs to the ZIP transporter (TC 2.A.5) family. Expressed only in prostate and uterine epithelial cells.

The protein localises to the cell membrane. It carries out the reaction Zn(2+)(in) = Zn(2+)(out). The catalysed reaction is Cd(2+)(in) = Cd(2+)(out). Its activity is regulated as follows. Activity is increased at acidic pH (6.5). Inhibited in the presence of high extracellular K(+). Its function is as follows. Transporter for the divalent cation Zn(2+). Mediates the influx of Zn(2+) into cells from extracellular space. The Zn(2+) uniporter activity is independent of H(+)-driving force, but is modulated by extracellular pH and membrane potential. Also transports other divalent cations Zn(2+), Cd2(+), Cu2(+), Co2(+) in the order of decreasing affinity, respectively. In the skin, aids in the differentiation of keratinocytes in the epidermis. This chain is Zinc transporter ZIP2, found in Homo sapiens (Human).